Reading from the N-terminus, the 147-residue chain is Lysozyme C (147 aa).

Positions M1–P17 are cleaved as a signal peptide. The 129-residue stretch at K19–L147 folds into the C-type lysozyme domain. Disulfide bonds link C24/C145, C48/C133, C82/C98, and C94/C112. Catalysis depends on residues E53 and D70.

This sequence belongs to the glycosyl hydrolase 22 family. Monomer. Post-translationally, by an evolutionary shift in the site of proteolytic cleavage of prelysozyme, Gly-18 became the N-terminal residue of the mature protein instead of being the C-terminal residue of the signal sequence as in other birds.

Its subcellular location is the secreted. The catalysed reaction is Hydrolysis of (1-&gt;4)-beta-linkages between N-acetylmuramic acid and N-acetyl-D-glucosamine residues in a peptidoglycan and between N-acetyl-D-glucosamine residues in chitodextrins.. Functionally, lysozymes have primarily a bacteriolytic function; those in tissues and body fluids are associated with the monocyte-macrophage system and enhance the activity of immunoagents. In Phasianus colchicus colchicus (Black-necked pheasant), this protein is Lysozyme C (LYZ).